A 349-amino-acid chain; its full sequence is MDIKGALNRIVNQLDLTTEEMQAVMRQIMTGQCTDAQIGAFLMGMRMKSETIDEIVGAVAVMRELADGVQLPTLKHVVDVVGTGGDGANIFNVSSAASFVVAAAGGKVAKHGNRAVSGKSGSADLLEAAGIYLELTSEQVARCIDTVGVGFMFAQVHHKAMKYAAGPRRELGLRTLFNMLGPLTNPAGVRHQVVGVFTQELCKPLAEVLKRLGSEHVLVVHSRDGLDEFSLAAATHIAELKDGEVREYEVRPEDFGIKSQTLMGLEVDSPQASLELIRDALGRRKTEAGQKAAELIVMNAGPALYAADLATSLHEGIQLAHDALHTGLAREKMDELVAFTAVYREENAQ.

5-phospho-alpha-D-ribose 1-diphosphate is bound by residues glycine 82, 85–86 (GD), 92–95 (NVSS), 110–118 (KHGNRAVSG), and serine 122. Glycine 82 is a binding site for anthranilate. Residue serine 94 coordinates Mg(2+). Residue asparagine 113 participates in anthranilate binding. Arginine 168 is an anthranilate binding site. Mg(2+)-binding residues include aspartate 227 and glutamate 228.

Belongs to the anthranilate phosphoribosyltransferase family. Homodimer. The cofactor is Mg(2+).

It catalyses the reaction N-(5-phospho-beta-D-ribosyl)anthranilate + diphosphate = 5-phospho-alpha-D-ribose 1-diphosphate + anthranilate. It participates in amino-acid biosynthesis; L-tryptophan biosynthesis; L-tryptophan from chorismate: step 2/5. In terms of biological role, catalyzes the transfer of the phosphoribosyl group of 5-phosphorylribose-1-pyrophosphate (PRPP) to anthranilate to yield N-(5'-phosphoribosyl)-anthranilate (PRA). The sequence is that of Anthranilate phosphoribosyltransferase from Pseudomonas aeruginosa (strain LESB58).